Consider the following 996-residue polypeptide: Disabled homolog 2-interacting protein (996 aa).

The C2 domain occupies 1 to 118; it reads MENLRRAVHP…AGRQFVEKWY (118 aa). In terms of domain architecture, Ras-GAP spans 194-402; the sequence is GKVKDFLTDL…TNMQRFLLEI (209 aa). A necessary for interaction with AKT1 region spans residues 453-750; that stretch reads LRDVHTALST…RTPPTMLSTL (298 aa). Residues 460-475 show a composition bias toward polar residues; that stretch reads LSTPGSGQLPGTNDLA. Disordered stretches follow at residues 460-486 and 522-545; these read LSTP…SSVS and RSSG…PDLQ. Low complexity predominate over residues 476–486; sequence STPGSGSSSVS. Residues 522–538 show a composition bias toward polar residues; sequence RSSGVQPSPARSSSYSE. Ser535 carries the phosphoserine; by MAP3K5 and RIPK1 modification. Residue Ser554 is modified to Phosphoserine. Disordered stretches follow at residues 611-630, 650-672, 702-805, 822-841, and 971-996; these read VPTP…PQLL, PRGL…NSEE, SLTE…SPNA, EDEG…SKEE, and RNGV…SSNC. Residues 659-672 are compositionally biased toward low complexity; the sequence is EGHSSLSSHSNSEE. Residues 726 to 738 are compositionally biased toward pro residues; the sequence is QPPPPPPPPPPAP. Polar residues-rich tracts occupy residues 746–762 and 774–783; these read MLST…TLAS and LRQQSSSSKG. A phosphoserine mark is found at Ser785 and Ser802. The span at 830–841 shows a compositional bias: basic and acidic residues; it reads PPHRDRLRSKEE. Residues 832-966 adopt a coiled-coil conformation; it reads HRDRLRSKEE…SALTQLKERY (135 aa). Polar residues predominate over residues 974 to 996; the sequence is VSPTNPTKLQITENGEFRNSSNC.

In terms of assembly, on plasma membrane, exists in an inactive form complexed with TNFR1; in response to TNF-alpha, dissociates from TNFR1 complex, translocates to cytoplasm and forms part of an intracellular signaling complex comprising TRADD, RIPK1, TRAF2 and MAP3K5. Interacts (via NPXY motif) with DAB2 (via PID domain). Interacts (via PH domain) with ERN1. Part of a cytoplasmic complex made of HIPK1, DAB2IP and MAP3K5 in response to TNF-alpha; this complex formation promotes MAP3K5-JNK activation and subsequent apoptosis. Interacts (via N-terminal domain) with JAK2; the interaction occurs in a IFNG/IFN-gamma-dependent manner and inhibits JAK2 autophosphorylation activity. Interacts (via C2 domain) with GSK3B; the interaction stimulates GSK3B kinase activation. Interacts (via C2 domain) with PPP2CA. Interacts (via proline-rich motif) with a regulatory p85 subunit (via SH3 domain) of the PI3K complex; the interaction inhibits the PI3K-AKT complex activity in a TNF-alpha-dependent manner in prostate cancer (PCa) cells. Interacts with AKT1; the interaction is increased in a TNF-alpha-induced manner. Interacts (via C2 domain and active form preferentially) with KDR/VEGFR2 (tyrosine-phosphorylated active form preferentially); the interaction occurs at the late phase of VEGFA response and inhibits KDR/VEGFR2 activity. Interacts (via N-terminus C2 domain) with MAP3K5 ('Ser-966' dephosphorylated form preferentially); the interaction occurs in a TNF-alpha-induced manner. Interacts (via Ras-GAP domain) with the catalytic subunit of protein phosphatase PP2A; the interaction occurs in resting endothelial cells, is further enhanced by TNF-alpha stimulation and is required to bridge PP2A to MAP3K5. Interacts (via C-terminus PER domain) with TRAF2 (via zinc fingers); the interaction occurs in a TNF-alpha-dependent manner. Interacts with 14-3-3 proteins; the interaction occurs in a TNF-alpha-dependent manner. Interacts (via Ras-GAP domain) with RIPK1 (via kinase domain); the interaction occurs in a TNF-alpha-dependent manner. Interacts with DAB1 and DAB2. Interacts with RAB40C; acts as a GAP for RAB40C. Post-translationally, in response to TNF-alpha-induction, phosphorylated at Ser-535; phosphorylation leads to a conformational change, and thus, increases its association with 14-3-3 proteins, MAP3K5, RIPK1 and TRAF2 in endothelial cells; also stimulates regulatory p85 subunit sequestring and PI3K-p85 complex activity inhibition. As to expression, expressed in brain, lung, thymus, bladder and skeletal muscle. Up-regulatedd during prostate degeneration.

The protein resides in the cytoplasm. It is found in the cell membrane. It localises to the membrane. The protein localises to the cell projection. Its subcellular location is the dendrite. Functionally, functions as a scaffold protein implicated in the regulation of a large spectrum of both general and specialized signaling pathways. Involved in several processes such as innate immune response, inflammation and cell growth inhibition, apoptosis, cell survival, angiogenesis, cell migration and maturation. Also plays a role in cell cycle checkpoint control; reduces G1 phase cyclin levels resulting in G0/G1 cell cycle arrest. Mediates signal transduction by receptor-mediated inflammatory signals, such as the tumor necrosis factor (TNF), interferon (IFN) or lipopolysaccharide (LPS). Modulates the balance between phosphatidylinositol 3-kinase (PI3K)-AKT-mediated cell survival and apoptosis stimulated kinase (MAP3K5)-JNK signaling pathways; sequesters both AKT1 and MAP3K5 and counterbalances the activity of each kinase by modulating their phosphorylation status in response to pro-inflammatory stimuli. Acts as a regulator of the endoplasmic reticulum (ER) unfolded protein response (UPR) pathway; specifically involved in transduction of the ER stress-response to the JNK cascade through ERN1. Mediates TNF-alpha-induced apoptosis activation by facilitating dissociation of inhibitor 14-3-3 from MAP3K5; recruits the PP2A phosphatase complex which dephosphorylates MAP3K5 on 'Ser-966', leading to the dissociation of 13-3-3 proteins and activation of the MAP3K5-JNK signaling pathway in endothelial cells. Acts a negative regulator in the IFN-gamma-mediated JAK-STAT signaling cascade by inhibiting smooth muscle cell (VSMCs) proliferation and intimal expansion, and thus, prevents graft arteriosclerosis (GA). Acts as a GTPase-activating protein (GAP) for the ADP ribosylation factor 6 (ARF6). Promotes hydrolysis of the ARF6-bound GTP and thus, negatively regulates phosphatidylinositol 4,5-bisphosphate (PIP2)-dependent TLR4-TIRAP-MyD88 and NF-kappa-B signaling pathways in endothelial cells in response to lipopolysaccharides (LPS). Binds specifically to phosphatidylinositol 4-phosphate (PtdIns4P) and phosphatidylinositol 3-phosphate (PtdIns3P). In response to vascular endothelial growth factor (VEGFA), acts as a negative regulator of the VEGFR2-PI3K-mediated angiogenic signaling pathway by inhibiting endothelial cell migration and tube formation. In the developing brain, promotes both the transition from the multipolar to the bipolar stage and the radial migration of cortical neurons from the ventricular zone toward the superficial layer of the neocortex in a glial-dependent locomotion process. Probable downstream effector of the Reelin signaling pathway; promotes Purkinje cell (PC) dendrites development and formation of cerebellar synapses. Also functions as a tumor suppressor protein in prostate cancer progression; prevents cell proliferation and epithelial-to-mesenchymal transition (EMT) through activation of the glycogen synthase kinase-3 beta (GSK3B)-induced beta-catenin and inhibition of PI3K-AKT and Ras-MAPK survival downstream signaling cascades, respectively. Mediates TNF/TRAF2-induced MAP3K5-JNK activation, while it inhibits CHUK-NF-kappa-B signaling. Functions as a Ras GTPase-activating protein. May act as a tumor suppressor gene. In Rattus norvegicus (Rat), this protein is Disabled homolog 2-interacting protein (Dab2ip).